Reading from the N-terminus, the 363-residue chain is Trans-2,3-enoyl-CoA reductase-like (363 aa).

Residue Ser-37 is modified to Phosphoserine. The next 4 helical transmembrane spans lie at Trp-143–Leu-163, Asn-216–Ile-235, Val-250–Val-270, and Ile-311–Ile-331.

Belongs to the steroid 5-alpha reductase family.

The protein resides in the membrane. It is found in the endoplasmic reticulum. The chain is Trans-2,3-enoyl-CoA reductase-like (TECRL) from Bos taurus (Bovine).